We begin with the raw amino-acid sequence, 428 residues long: Ribulose bisphosphate carboxylase (428 aa).

Lys151 acts as the Proton acceptor in catalysis. Residue Lys153 participates in substrate binding. Lys177, Asp179, and Glu180 together coordinate Mg(2+). At Lys177 the chain carries N6-carboxylysine. His270 functions as the Proton acceptor in the catalytic mechanism. Residues Arg271, His303, 354–356, and 376–379 contribute to the substrate site; these read SGG and QFGG.

It belongs to the RuBisCO large chain family. Type III subfamily. As to quaternary structure, homodimer. In contrast to form I RuBisCO, the form III RuBisCO is composed solely of large subunits. The cofactor is Mg(2+).

The catalysed reaction is 2 (2R)-3-phosphoglycerate + 2 H(+) = D-ribulose 1,5-bisphosphate + CO2 + H2O. It catalyses the reaction D-ribulose 1,5-bisphosphate + O2 = 2-phosphoglycolate + (2R)-3-phosphoglycerate + 2 H(+). Reversibly inhibited by O(2). In terms of biological role, catalyzes the addition of molecular CO(2) and H(2)O to ribulose 1,5-bisphosphate (RuBP), generating two molecules of 3-phosphoglycerate (3-PGA). Functions in an archaeal AMP degradation pathway, together with AMP phosphorylase and R15P isomerase. This chain is Ribulose bisphosphate carboxylase, found in Methanosarcina acetivorans (strain ATCC 35395 / DSM 2834 / JCM 12185 / C2A).